The sequence spans 415 residues: Serine hydroxymethyltransferase (415 aa).

Residues leucine 117 and 121–123 each bind (6S)-5,6,7,8-tetrahydrofolate; that span reads GHL. Position 226 is an N6-(pyridoxal phosphate)lysine (lysine 226). Residues glutamate 241 and 349-351 each bind (6S)-5,6,7,8-tetrahydrofolate; that span reads SPF.

The protein belongs to the SHMT family. In terms of assembly, homodimer. Requires pyridoxal 5'-phosphate as cofactor.

It is found in the cytoplasm. It carries out the reaction (6R)-5,10-methylene-5,6,7,8-tetrahydrofolate + glycine + H2O = (6S)-5,6,7,8-tetrahydrofolate + L-serine. Its pathway is one-carbon metabolism; tetrahydrofolate interconversion. It functions in the pathway amino-acid biosynthesis; glycine biosynthesis; glycine from L-serine: step 1/1. In terms of biological role, catalyzes the reversible interconversion of serine and glycine with tetrahydrofolate (THF) serving as the one-carbon carrier. This reaction serves as the major source of one-carbon groups required for the biosynthesis of purines, thymidylate, methionine, and other important biomolecules. Also exhibits THF-independent aldolase activity toward beta-hydroxyamino acids, producing glycine and aldehydes, via a retro-aldol mechanism. The sequence is that of Serine hydroxymethyltransferase from Geobacter metallireducens (strain ATCC 53774 / DSM 7210 / GS-15).